The sequence spans 325 residues: Alpha-cuprenene synthase COP6 (325 aa).

Residues aspartate 102, glutamate 166, asparagine 224, serine 228, and glutamate 232 each contribute to the Mg(2+) site.

The protein belongs to the trichodiene synthase family. Requires Mg(2+) as cofactor.

Its function is as follows. Alpha-cuprenene synthase; part of the gene cluster that mediates the biosynthesis of alpha-cuprenene and oxidized derivatives. The alpha-cuprenene synthase COP6 is the only sesquiterpene synthase identified in C.cinereus that appears to be part of a biosynthetic gene cluster and is highly specific since it catalyzes the cyclization of (2E,6E)-farnesyl diphosphate into only one product, alpha-cuprenene. COP6 is also able to perform the cyclization of geranyl diphosphate. The cytochrome P450 monooxygenase COX2 then oxidizes the cyclohexadiene ring of alpha-cuprenene at positions 1 and 4, yielding first alpha-cuparene, followed by alpha-cuparophenol and a further yet unidentified compound resulting from one additional oxidation step. The cytochrome P450 monooxygenase COX1 then likely catalyzes the oxidation at position 9 of the pentane ring of alpha-cuprenene to give the corresponding hydroxy or ketone derivatives. The polypeptide is Alpha-cuprenene synthase COP6 (Coprinopsis cinerea (strain Okayama-7 / 130 / ATCC MYA-4618 / FGSC 9003) (Inky cap fungus)).